The sequence spans 321 residues: Torsin-2A (321 aa).

The signal sequence occupies residues Met-1–Ala-26. Gly-93–Ser-100 lines the ATP pocket. The N-linked (GlcNAc...) asparagine glycan is linked to Asn-149.

Belongs to the ClpA/ClpB family. Torsin subfamily. In terms of assembly, homohexamer. Interacts with TOR1AIP1. In terms of tissue distribution, isoform 1 is expressed ubiquitously, except in cardiac and endothelial tissues.

It localises to the endoplasmic reticulum lumen. The chain is Torsin-2A (TOR2A) from Homo sapiens (Human).